Reading from the N-terminus, the 432-residue chain is Peptidase B (432 aa).

Residues K196 and D201 each contribute to the Mn(2+) site. K208 is a catalytic residue. Positions 219, 278, and 280 each coordinate Mn(2+). R282 is an active-site residue.

This sequence belongs to the peptidase M17 family. In terms of assembly, homohexamer. The cofactor is Mn(2+).

It is found in the cytoplasm. It catalyses the reaction Release of an N-terminal amino acid, Xaa, from a peptide or arylamide. Xaa is preferably Glu or Asp but may be other amino acids, including Leu, Met, His, Cys and Gln.. Probably plays an important role in intracellular peptide degradation. The polypeptide is Peptidase B (Vibrio vulnificus (strain CMCP6)).